Reading from the N-terminus, the 122-residue chain is Large ribosomal subunit protein uL14c (122 aa).

The protein belongs to the universal ribosomal protein uL14 family. In terms of assembly, part of the 50S ribosomal subunit.

It is found in the plastid. It localises to the chloroplast. Binds to 23S rRNA. This chain is Large ribosomal subunit protein uL14c, found in Chlorokybus atmophyticus (Soil alga).